The chain runs to 347 residues: Beta-hexosaminidase (347 aa).

Residues aspartate 64, arginine 72, arginine 138, and 168-169 (KH) each bind substrate. Histidine 181 functions as the Proton donor/acceptor in the catalytic mechanism. The active-site Nucleophile is aspartate 251.

It belongs to the glycosyl hydrolase 3 family. NagZ subfamily.

The protein resides in the cytoplasm. It carries out the reaction Hydrolysis of terminal non-reducing N-acetyl-D-hexosamine residues in N-acetyl-beta-D-hexosaminides.. It participates in cell wall biogenesis; peptidoglycan recycling. Functionally, plays a role in peptidoglycan recycling by cleaving the terminal beta-1,4-linked N-acetylglucosamine (GlcNAc) from peptide-linked peptidoglycan fragments, giving rise to free GlcNAc, anhydro-N-acetylmuramic acid and anhydro-N-acetylmuramic acid-linked peptides. The polypeptide is Beta-hexosaminidase (Thioalkalivibrio sulfidiphilus (strain HL-EbGR7)).